The chain runs to 96 residues: uncharacterized protein (96 aa).

Its subcellular location is the mitochondrion. This is an uncharacterized protein from Saccharomyces cerevisiae (strain ATCC 204508 / S288c) (Baker's yeast).